A 200-amino-acid polypeptide reads, in one-letter code: Recombination protein RecR (200 aa).

Residues 57 to 72 form a C4-type zinc finger; sequence CSHCRTFTENERCEIC. One can recognise a Toprim domain in the interval 81–176; the sequence is GLLCVVESPA…KVSRIAHGVP (96 aa).

It belongs to the RecR family.

Its function is as follows. May play a role in DNA repair. It seems to be involved in an RecBC-independent recombinational process of DNA repair. It may act with RecF and RecO. The chain is Recombination protein RecR from Aeromonas hydrophila subsp. hydrophila (strain ATCC 7966 / DSM 30187 / BCRC 13018 / CCUG 14551 / JCM 1027 / KCTC 2358 / NCIMB 9240 / NCTC 8049).